Consider the following 504-residue polypeptide: FAD-dependent monooxygenase nsrK (504 aa).

Arg-146 is a binding site for FAD. Arg-227 is a catalytic residue. 2 residues coordinate FAD: Asp-340 and Gly-353.

Belongs to the paxM FAD-dependent monooxygenase family. The cofactor is FAD.

It functions in the pathway secondary metabolite biosynthesis. Functionally, FAD-dependent monooxygenase; part of the gene cluster that mediates the biosynthesis of the tetrahydroxanthone dimer neosartorin, which exhibits antibacterial activity. The two different monomeric units appear to be synthesized by the same set of enzymes, among which the Baeyer-Villiger monooxygenase nsrF is the key enzyme for the divergence of the biosynthetic routes. The pathway begins with the synthesis of atrochrysone thioester by the polyketide synthase nsrB. The atrochrysone carboxyl ACP thioesterase nsrC then breaks the thioester bond and releases the atrochrysone carboxylic acid from AacuL. Atrochrysone carboxylic acid is decarboxylated by the decarboxylase nsrE, and oxidized by the anthrone oxygenase nsrD to yield emodin. Emodin is then reduced to emodin hydroquinone by the oxidoreductase nsrR. A-ring reduction by the short chain dehydrogenase nsrJ, dehydration by the scytalone dehydratase-like protein nsrI and probable spontaneous re-oxidation, results in overall deoxygenation to chrysophanol. The Baeyer-Villiger monooxygenase nsrF accepts chrysophanol as a substrate to insert one oxygen atom at two different positions to yield the precursors of both monomric units. NsrF is promiscuous/flexible in interacting with the 2 (non methylated and methylated) aromatic rings of chrysophanol, thus diverging the biosynthetic pathway at this point. After the hydrolysis of the lactones, methylesterification by the methyltransferase nsrG yields respectively moniliphenone and 2,2',6'-trihydroxy-4-methyl-6-methoxya-cyldiphenylmethanone. The next steps are the hydroxylation by the FAD-dependent monooxygenase nsrK, followed by isomerization by the monooxygenase nsrQ. The short chain dehydrogenase/reductase nsrO then catalyzes the C-5 ketoreduction to give the xanthone skeleton of blennolide C and 5-acetylblennolide A. The acetyltransferase nsrL has a strict substrate specificity and uses only blennolide A but not blennolide C to yield 5-acetylblennolide A as the single-acetylated product. In the final step of the biosynthesis, the heterodimerization of the 2 xanthones, blennolide C and 5-acetylblennolide A, is catalyzed by the cytochrome P450 monooxygenase nsrP. NsrP can utilize at least three different xanthones as its substrates to perform the dimerization reaction. The sequence is that of FAD-dependent monooxygenase nsrK from Aspergillus novofumigatus (strain IBT 16806).